We begin with the raw amino-acid sequence, 119 residues long: Small ribosomal subunit protein bS16 (119 aa).

Residues 89–103 (TTKSTKEKAATDKKA) are compositionally biased toward basic and acidic residues. The interval 89–119 (TTKSTKEKAATDKKAKVTKKPKTKTTTDVKK) is disordered.

Belongs to the bacterial ribosomal protein bS16 family.

This Spiroplasma kunkelii protein is Small ribosomal subunit protein bS16.